A 441-amino-acid polypeptide reads, in one-letter code: Nuclear distribution protein nudF (441 aa).

The LisH domain occupies 9–41; the sequence is QAEELHKSIIAYLASVNLTESSAALRAELGDSV. WD repeat units lie at residues 87-128, 130-170, 174-221, 224-263, 266-326, 328-367, 372-402, and 403-440; these read GHRE…RTVK, HTKA…KNIR, GHDH…CVKT, GHVD…TKST, GHEH…IKTL, GHDN…KCVR, AHGH…NGAP, and AATA…RIFA. The disordered stretch occupies residues 390 to 415; the sequence is GGANGESETNGAPAATATTNGVRPDP. Low complexity predominate over residues 398–410; that stretch reads TNGAPAATATTNG.

This sequence belongs to the WD repeat LIS1/nudF family. As to quaternary structure, self-associates. Interacts with nudE and dynein.

It is found in the cytoplasm. It localises to the cytoskeleton. Its subcellular location is the spindle pole. Positively regulates the activity of the minus-end directed microtubule motor protein dynein. May enhance dynein-mediated microtubule sliding by targeting dynein to the microtubule plus end. Required for nuclear migration during vegetative growth as well as development. Required for retrograde early endosome (EE) transport from the hyphal tip. Required for localization of dynein to the mitotic spindle poles. Recruits additional proteins to the dynein complex at SPBs. This Neosartorya fischeri (strain ATCC 1020 / DSM 3700 / CBS 544.65 / FGSC A1164 / JCM 1740 / NRRL 181 / WB 181) (Aspergillus fischerianus) protein is Nuclear distribution protein nudF.